We begin with the raw amino-acid sequence, 213 residues long: Adenylate kinase (213 aa).

10–15 contributes to the ATP binding site; it reads GAGKGT. The NMP stretch occupies residues 30-59; the sequence is AVGDIFRTIIKTSTSEAELINNYVKQGALI. AMP is bound by residues Arg36, 57-59, 85-88, and Gln92; these read ALI and GYPR. The LID stretch occupies residues 123 to 161; the sequence is GRYSCKNCGKIYNVHFLQPKTDYVCDVCSSNVFDYRRDD. ATP is bound at residue Arg124. Zn(2+) is bound by residues Cys127 and Cys130. ATP is bound at residue 133 to 134; the sequence is IY. Residues Cys147 and Cys150 each coordinate Zn(2+). AMP contacts are provided by Arg158 and Arg169. Lys197 serves as a coordination point for ATP.

Belongs to the adenylate kinase family. As to quaternary structure, monomer.

Its subcellular location is the cytoplasm. It catalyses the reaction AMP + ATP = 2 ADP. It participates in purine metabolism; AMP biosynthesis via salvage pathway; AMP from ADP: step 1/1. Catalyzes the reversible transfer of the terminal phosphate group between ATP and AMP. Plays an important role in cellular energy homeostasis and in adenine nucleotide metabolism. The chain is Adenylate kinase from Rickettsia typhi (strain ATCC VR-144 / Wilmington).